The primary structure comprises 202 residues: Type II restriction enzyme MthZI (202 aa).

The enzyme catalyses Endonucleolytic cleavage of DNA to give specific double-stranded fragments with terminal 5'-phosphates.. Its function is as follows. A P subtype restriction enzyme that recognizes the double-stranded sequence 5'-CTAG-3' and cleaves after C-1. The sequence is that of Type II restriction enzyme MthZI from Methanothermobacter thermautotrophicus (Methanobacterium thermoformicicum).